A 313-amino-acid polypeptide reads, in one-letter code: Porphobilinogen deaminase (313 aa).

At Cys242 the chain carries S-(dipyrrolylmethanemethyl)cysteine.

It belongs to the HMBS family. In terms of assembly, monomer. It depends on dipyrromethane as a cofactor.

It carries out the reaction 4 porphobilinogen + H2O = hydroxymethylbilane + 4 NH4(+). Its pathway is porphyrin-containing compound metabolism; protoporphyrin-IX biosynthesis; coproporphyrinogen-III from 5-aminolevulinate: step 2/4. Tetrapolymerization of the monopyrrole PBG into the hydroxymethylbilane pre-uroporphyrinogen in several discrete steps. The sequence is that of Porphobilinogen deaminase from Marinobacter nauticus (strain ATCC 700491 / DSM 11845 / VT8) (Marinobacter aquaeolei).